Reading from the N-terminus, the 339-residue chain is MSRLTLALDVMGGDIGPRITIPASLIALEKDPMLSLLLFGDSQQILPLLENIPASMKERLTVCHCSRTIDNEHGISYALRHSKGTSMRLAIEAVQKGDAQGCVSAGNTAALMGLSKILLQPLKGIQRPALISVIPTVDGGKSVMLDLGANIDCDAENLYQFALMGSIFAENTLNLVYPRIALLNIGSEDIKGHKSIRDAAMLLEKDPALNYTGFIEGNFLLNGQADVIVSDGFVGNVALKTLEGAAKNVIALIKGKSKNSLLKPLFSWLLTHIFKESYQRLKRINPDEYNGASLIGLTAVVVKSHGSANSDAFAYAIADAAFQTRQQIPTKILAGLEKY.

The protein belongs to the PlsX family. In terms of assembly, homodimer. Probably interacts with PlsY.

It localises to the cytoplasm. It catalyses the reaction a fatty acyl-[ACP] + phosphate = an acyl phosphate + holo-[ACP]. The protein operates within lipid metabolism; phospholipid metabolism. In terms of biological role, catalyzes the reversible formation of acyl-phosphate (acyl-PO(4)) from acyl-[acyl-carrier-protein] (acyl-ACP). This enzyme utilizes acyl-ACP as fatty acyl donor, but not acyl-CoA. In Pasteurella multocida (strain Pm70), this protein is Phosphate acyltransferase.